We begin with the raw amino-acid sequence, 229 residues long: MLSRLGARVLYCLAGLALLASGGCALMPREPLVQLPTTARAEPRPMGPATGSIFASSYAGNPLFEDRRPRNVGDILTIVITENVNATKNSGTNASRTGSTSMAFDAVPKALAGLFSSSSNASINGANALKASGGASAANTFNGTITVTVLEVLANGNLVVSGEKQLAINQGAEFIRFSGVVNPRTITGDNGVLSTQVADARIEYTAKGYIDEAQNMGWLQRFFLNVSPF.

A signal peptide spans 1–23 (MLSRLGARVLYCLAGLALLASGG). The N-palmitoyl cysteine moiety is linked to residue cysteine 24. Cysteine 24 carries S-diacylglycerol cysteine lipidation.

It belongs to the FlgH family. In terms of assembly, the basal body constitutes a major portion of the flagellar organelle and consists of four rings (L,P,S, and M) mounted on a central rod.

It is found in the cell outer membrane. Its subcellular location is the bacterial flagellum basal body. Functionally, assembles around the rod to form the L-ring and probably protects the motor/basal body from shearing forces during rotation. The protein is Flagellar L-ring protein of Cupriavidus pinatubonensis (strain JMP 134 / LMG 1197) (Cupriavidus necator (strain JMP 134)).